A 433-amino-acid chain; its full sequence is Inorganic triphosphatase (433 aa).

The region spanning 2–202 is the CYTH domain; that stretch reads AQEIELKFIV…ARGYHLAQGN (201 aa). In terms of domain architecture, CHAD spans 218–433; sequence KADVEQGLEA…EPFWLHSGKR (216 aa).

The enzyme catalyses triphosphate + H2O = phosphate + diphosphate. Its activity is regulated as follows. Inhibited by calcium ion and activated by magnesium ion. Functionally, involved in the hydrolysis of the beta-gamma-phosphoanhydride linkage of triphosphate-containing substrates (inorganic or nucleoside-linked). Catalyzes the hydrolysis of inorganic triphosphate (PPPi), which could be cytotoxic because of its high affinity for calcium ion, thereby interfering with calcium signaling. It also hydrolyzes slowly thiamine triphosphate (ThTP). YgiF is a specific PPPase, but it contributes only marginally to the total PPPase activity in E.coli, where the main enzyme responsible for hydrolysis of PPPi is inorganic pyrophosphatase (PPase). The chain is Inorganic triphosphatase (ygiF) from Escherichia coli (strain K12).